The chain runs to 491 residues: Protein nucleotidyltransferase YdiU (491 aa).

Residues glycine 94, glycine 96, arginine 97, lysine 117, aspartate 129, glycine 130, arginine 180, and arginine 187 each contribute to the ATP site. Aspartate 256 (proton acceptor) is an active-site residue. 2 residues coordinate Mg(2+): asparagine 257 and aspartate 266. Aspartate 266 provides a ligand contact to ATP.

This sequence belongs to the SELO family. The cofactor is Mg(2+). Mn(2+) is required as a cofactor.

The enzyme catalyses L-seryl-[protein] + ATP = 3-O-(5'-adenylyl)-L-seryl-[protein] + diphosphate. The catalysed reaction is L-threonyl-[protein] + ATP = 3-O-(5'-adenylyl)-L-threonyl-[protein] + diphosphate. It carries out the reaction L-tyrosyl-[protein] + ATP = O-(5'-adenylyl)-L-tyrosyl-[protein] + diphosphate. It catalyses the reaction L-histidyl-[protein] + UTP = N(tele)-(5'-uridylyl)-L-histidyl-[protein] + diphosphate. The enzyme catalyses L-seryl-[protein] + UTP = O-(5'-uridylyl)-L-seryl-[protein] + diphosphate. The catalysed reaction is L-tyrosyl-[protein] + UTP = O-(5'-uridylyl)-L-tyrosyl-[protein] + diphosphate. Nucleotidyltransferase involved in the post-translational modification of proteins. It can catalyze the addition of adenosine monophosphate (AMP) or uridine monophosphate (UMP) to a protein, resulting in modifications known as AMPylation and UMPylation. The protein is Protein nucleotidyltransferase YdiU of Clostridium botulinum (strain Loch Maree / Type A3).